The sequence spans 267 residues: 5'-nucleotidase SurE (267 aa).

Residues Asp9, Asp10, Ser40, and Asn97 each coordinate a divalent metal cation.

This sequence belongs to the SurE nucleotidase family. It depends on a divalent metal cation as a cofactor.

It is found in the cytoplasm. The enzyme catalyses a ribonucleoside 5'-phosphate + H2O = a ribonucleoside + phosphate. In terms of biological role, nucleotidase that shows phosphatase activity on nucleoside 5'-monophosphates. In Helicobacter pylori (strain Shi470), this protein is 5'-nucleotidase SurE.